A 35-amino-acid polypeptide reads, in one-letter code: Hemocyanin A chain (35 aa).

Belongs to the tyrosinase family. Hemocyanin subfamily. In terms of tissue distribution, hemolymph.

The protein localises to the secreted. It is found in the extracellular space. Functionally, hemocyanins are copper-containing oxygen carriers occurring freely dissolved in the hemolymph of many mollusks and arthropods. The chain is Hemocyanin A chain from Cherax destructor (Common yabby crayfish).